Consider the following 286-residue polypeptide: Acetylglutamate kinase (286 aa).

Residues 70–71 (GG), R92, and N184 contribute to the substrate site.

It belongs to the acetylglutamate kinase family. ArgB subfamily.

The protein localises to the cytoplasm. The enzyme catalyses N-acetyl-L-glutamate + ATP = N-acetyl-L-glutamyl 5-phosphate + ADP. Its pathway is amino-acid biosynthesis; L-arginine biosynthesis; N(2)-acetyl-L-ornithine from L-glutamate: step 2/4. Catalyzes the ATP-dependent phosphorylation of N-acetyl-L-glutamate. This Ruegeria sp. (strain TM1040) (Silicibacter sp.) protein is Acetylglutamate kinase.